The sequence spans 428 residues: Tol-Pal system protein TolB (428 aa).

The N-terminal stretch at 1 to 24 (MPSLKTLLRGVLVAAMLVAGSARA) is a signal peptide.

Belongs to the TolB family. The Tol-Pal system is composed of five core proteins: the inner membrane proteins TolA, TolQ and TolR, the periplasmic protein TolB and the outer membrane protein Pal. They form a network linking the inner and outer membranes and the peptidoglycan layer.

The protein localises to the periplasm. Part of the Tol-Pal system, which plays a role in outer membrane invagination during cell division and is important for maintaining outer membrane integrity. The sequence is that of Tol-Pal system protein TolB from Chromobacterium violaceum (strain ATCC 12472 / DSM 30191 / JCM 1249 / CCUG 213 / NBRC 12614 / NCIMB 9131 / NCTC 9757 / MK).